A 442-amino-acid polypeptide reads, in one-letter code: D-serine dehydratase (442 aa).

Residue Lys118 is modified to N6-(pyridoxal phosphate)lysine.

Belongs to the serine/threonine dehydratase family. DsdA subfamily. Monomer. Pyridoxal 5'-phosphate serves as cofactor.

It catalyses the reaction D-serine = pyruvate + NH4(+). The sequence is that of D-serine dehydratase from Citrobacter koseri (strain ATCC BAA-895 / CDC 4225-83 / SGSC4696).